A 354-amino-acid chain; its full sequence is UDP-3-O-acylglucosamine N-acyltransferase (354 aa).

Histidine 247 serves as the catalytic Proton acceptor.

Belongs to the transferase hexapeptide repeat family. LpxD subfamily. As to quaternary structure, homotrimer.

The catalysed reaction is a UDP-3-O-[(3R)-3-hydroxyacyl]-alpha-D-glucosamine + a (3R)-hydroxyacyl-[ACP] = a UDP-2-N,3-O-bis[(3R)-3-hydroxyacyl]-alpha-D-glucosamine + holo-[ACP] + H(+). The protein operates within bacterial outer membrane biogenesis; LPS lipid A biosynthesis. In terms of biological role, catalyzes the N-acylation of UDP-3-O-acylglucosamine using 3-hydroxyacyl-ACP as the acyl donor. Is involved in the biosynthesis of lipid A, a phosphorylated glycolipid that anchors the lipopolysaccharide to the outer membrane of the cell. This is UDP-3-O-acylglucosamine N-acyltransferase from Chlamydia trachomatis serovar L2b (strain UCH-1/proctitis).